A 686-amino-acid chain; its full sequence is U3 small nucleolar RNA-associated protein 4 homolog (686 aa).

WD repeat units lie at residues 14-53 (YVPS…FQEK), 57-96 (GHES…IKYT), 99-138 (AFGG…IQFA), 143-181 (RQKS…IIRK), 193-231 (KSRC…LVKS), 234-273 (VANA…SNSS), 285-322 (HHTH…EVKN), 324-359 (DAAL…ELWR), 435-474 (SFLR…FKHL), 482-521 (GTVE…LHCT), and 524-563 (AYNF…YTEW). A Glycyl lysine isopeptide (Lys-Gly) (interchain with G-Cter in SUMO2) cross-link involves residue Lys-321.

As to quaternary structure, interacts with HIVEP1 Interacts with NOL11. Part of the small subunit (SSU) processome, composed of more than 70 proteins and the RNA chaperone small nucleolar RNA (snoRNA) U3. May be a component of the proposed t-UTP subcomplex of the ribosomal small subunit (SSU) processome containing at least UTP4, WDR43, HEATR1, UTP15, WDR75. May be phosphorylated during mitosis; may control the association of this protein with WRD43 and UTP15. In terms of tissue distribution, expressed in liver.

It is found in the nucleus. The protein resides in the nucleolus. It localises to the chromosome. Ribosome biogenesis factor. Involved in nucleolar processing of pre-18S ribosomal RNA. Part of the small subunit (SSU) processome, first precursor of the small eukaryotic ribosomal subunit. During the assembly of the SSU processome in the nucleolus, many ribosome biogenesis factors, an RNA chaperone and ribosomal proteins associate with the nascent pre-rRNA and work in concert to generate RNA folding, modifications, rearrangements and cleavage as well as targeted d Involved in SSU pre-rRNA processing at sites A', A0, 1 and 2b. Required for optimal pre-ribosomal RNA transcription by RNA polymerase. May be a transcriptional regulator. The polypeptide is U3 small nucleolar RNA-associated protein 4 homolog (Utp4) (Mus musculus (Mouse)).